Consider the following 310-residue polypeptide: Prostate androgen-regulated mucin-like protein 1 homolog (310 aa).

The signal sequence occupies residues 1-20 (MVYKTLFALCILTAGWRVQS). Topologically, residues 21–258 (LPTSAPLSVS…EVEHALSSGS (238 aa)) are extracellular. Over residues 40-74 (TIWTSSPQNTDADTASPSNGTHNNSVLPVTASAPT) the composition is skewed to polar residues. The tract at residues 40–224 (TIWTSSPQNT…VPQEKTPPTT (185 aa)) is disordered. N58, N62, and N80 each carry an N-linked (GlcNAc...) asparagine glycan. Over residues 92 to 103 (SPGSNWEGTNTD) the composition is skewed to polar residues. The span at 150–209 (SPQAPASSPSSLSTSPPEVFSVSVTTNHSSTVTSTQPTGAPTAPESPTEESSSDHTPTSH) shows a compositional bias: low complexity. N176 carries an N-linked (GlcNAc...) asparagine glycan. A helical membrane pass occupies residues 259–279 (IAAITVTVIAVVLLVFGVAAY). Topologically, residues 280–310 (LKIRHSSYGRLLDDHDYGSWGNYNNPLYDDS) are cytoplasmic. S298 bears the Phosphoserine mark.

Belongs to the PARM family. In terms of processing, highly N-glycosylated and O-glycosylated.

It is found in the cell membrane. It localises to the golgi apparatus membrane. The protein localises to the endosome membrane. Its function is as follows. May regulate TLP1 expression and telomerase activity, thus enabling certain prostatic cells to resist apoptosis. This Pongo abelii (Sumatran orangutan) protein is Prostate androgen-regulated mucin-like protein 1 homolog (PARM1).